The chain runs to 367 residues: Leucine-rich repeat-containing protein 28 (367 aa).

9 LRR repeats span residues 16–36 (KHKN…ELLK), 42–63 (HLER…LAQK), 66–87 (NLVE…IGSL), 89–111 (KLQC…GGLR), 112–133 (ALRH…VGDL), 135–156 (ELQT…LHLC), 158–180 (SLQY…CQLP), 181–202 (SLNE…LGRS), and 204–226 (ELQY…LYNK).

The polypeptide is Leucine-rich repeat-containing protein 28 (Lrrc28) (Mus musculus (Mouse)).